The sequence spans 469 residues: Protein HEAT STRESS TOLERANT DWD 1 (469 aa).

Residues 1–15 (MGRNVKTKAKRKNKK) show a composition bias toward basic residues. 2 disordered regions span residues 1–29 (MGRNVKTKAKRKNKKKAEASSSEIPSIPT) and 115–150 (DVVPKTFGNGEDEDEDDEDDSDSDDDDGDEASKTPN). The segment covering 124-143 (GEDEDEDDEDDSDSDDDDGD) has biased composition (acidic residues). WD repeat units lie at residues 157–197 (AHHG…NALA), 221–261 (GHKD…WAVD), 267–307 (GHTA…SPAL), 311–351 (AHNA…GGDA), 358–398 (YHKH…DEEE), and 425–464 (QGQKDLKELHWHNQIPGMIISTAGDGFNILMPYNIQNTLP).

It belongs to the WD repeat RBAP46/RBAP48/MSI1 family. As to quaternary structure, probable component of CULLIN4 (CUL4) RING ligase (CRL4) complexes. Interacts with DDB1A and DDB1B. Associates with HSP90-1.

It functions in the pathway protein modification; protein ubiquitination. Its function is as follows. Probable substrate receptor of CRL4 E3 ligase complexes acting as negative regulators of thermotolerance by disturbing the action of HSP90-1 and by preventing the expression of heat-inducible genes (e.g. HSP14.7, HSP21, At2g03020 and WRKY28). The polypeptide is Protein HEAT STRESS TOLERANT DWD 1 (Arabidopsis thaliana (Mouse-ear cress)).